We begin with the raw amino-acid sequence, 481 residues long: Phototropic-responsive NPH3 family protein NPY4 (481 aa).

A BTB domain is found at 29–102; it reads TEIIIIIGNV…CYGITVTLNA (74 aa). Residues 207–450 enclose the NPH3 domain; that stretch reads DWWVEDLCEL…VQVLFFEQIR (244 aa). Phosphotyrosine is present on Tyr391. Positions 456–481 are disordered; the sequence is TGYSTPELTTTTLNTEDDEWDHEKEF. The span at 460–469 shows a compositional bias: low complexity; it reads TPELTTTTLN.

This sequence belongs to the NPH3 family. In terms of tissue distribution, expressed in the hypocotyl cells that would differentiate into vascular bundles. Highly expressed in primary root tips and radicles.

Its subcellular location is the cell membrane. The protein resides in the cytoplasm. It is found in the cytosol. Its pathway is protein modification; protein ubiquitination. Functionally, may act as a substrate-specific adapter of an E3 ubiquitin-protein ligase complex (CUL3-RBX1-BTB) which mediates the ubiquitination and subsequent proteasomal degradation of target proteins. Plays an essential role in auxin-mediated organogenesis and in root gravitropic responses through the control of PIN proteins (e.g. PIN1 and PIN2) polarity in the root tip endodermal cell layer and in shoot epidermis. Recruited to the plasma membrane by PINs (e.g. PIN1 and PIN2) and, in concert with AGC kinases-mediated (e.g. D6PK and PID) PINs phosphorylation, maintains their polarity through limiting lateral diffusion-based escape. In Arabidopsis thaliana (Mouse-ear cress), this protein is Phototropic-responsive NPH3 family protein NPY4.